Here is a 249-residue protein sequence, read N- to C-terminus: MTIDTVILDIEGTICPISFVKSVLFPYFVKQLPTTLNTIQFPLNLNINDTNSNQASIVQTLSKLPLSVTTSSESTYNYLKGLVDNDVKDPVLKALQGLIWKQGYESGEIKSPVYPDSIDFIEKFPKREANCKIYIYSSGSINAQKLLFSHVDNGTGIAMDLNPQLSGYFDITTAGFKQEASSYTKIIDQIDKKDNEKSVLFLSDYINEVNAAIESGMNSYVVIREGNTPIPDKELASHKIIYSLSELNL.

Mg(2+) contacts are provided by D9 and E11. Substrate is bound by residues 137–138 (SS) and K177. D204 serves as a coordination point for Mg(2+).

It belongs to the HAD-like hydrolase superfamily. MasA/MtnC family. In terms of assembly, monomer. The cofactor is Mg(2+).

It is found in the cytoplasm. Its subcellular location is the nucleus. It carries out the reaction 5-methylsulfanyl-2,3-dioxopentyl phosphate + H2O = 1,2-dihydroxy-5-(methylsulfanyl)pent-1-en-3-one + phosphate. It functions in the pathway amino-acid biosynthesis; L-methionine biosynthesis via salvage pathway; L-methionine from S-methyl-5-thio-alpha-D-ribose 1-phosphate: step 3/6. It participates in amino-acid biosynthesis; L-methionine biosynthesis via salvage pathway; L-methionine from S-methyl-5-thio-alpha-D-ribose 1-phosphate: step 4/6. Bifunctional enzyme that catalyzes the enolization of 2,3-diketo-5-methylthiopentyl-1-phosphate (DK-MTP-1-P) into the intermediate 2-hydroxy-3-keto-5-methylthiopentenyl-1-phosphate (HK-MTPenyl-1-P), which is then dephosphorylated to form the acireductone 1,2-dihydroxy-3-keto-5-methylthiopentene (DHK-MTPene). The sequence is that of Enolase-phosphatase E1 from Lodderomyces elongisporus (strain ATCC 11503 / CBS 2605 / JCM 1781 / NBRC 1676 / NRRL YB-4239) (Yeast).